A 571-amino-acid chain; its full sequence is MSQPWPAVEIARMILAGFDDYRDHFQRITLGARQRFEQARWQDIQQAAAARINLYEEKVAEVNGWLRQAFAAEVLLDVEQWPLVKNAYIHLIDPRLDDELAETWYNSLFCSLFSHDLISDGCMFIHTTRPSMRGRERAAQTRTYRLDGSLRNLLRAVFADYPFDMPYGDLEGDLARLEEQLRECLPDWVCKDPALAVELFVPVLYRNKGAYLVGRLYNSDEQWPLVIPLLHREGHGIEADALITDEAEVSIIFSFTRSYFMADVPVPAEFVNFLKRILPGKHIAELYTSIGFYKQGKSEFYRALINHLASSDDRFVMAPGVRGMVMSVFTLPGFNTVFKIIKDRFSPSKTVDRATVIDKYRLVKSVDRVGRMADTQEFADFRFPRSKFEPDCLAELLEVAPSTVALEGDTVLIRHCWTERRMTPLNLYLEQATEGQVLEALEDYGLAIKQLAAANIFPGDMLLKNFGVTRHGRVVFYDYDEISFLTEVNFRHIPPPRYPEDEMSGEPWYSIGPHDVFPEEFPPFLFADMGQRRLFSRLHGELYDADYWKGLQAAIREGKVIDVFPYRRKAR.

Residues 318–324 (APGVRGM) and Lys-339 contribute to the ATP site. Asp-374 is an active-site residue.

This sequence belongs to the AceK family.

It localises to the cytoplasm. It catalyses the reaction L-seryl-[isocitrate dehydrogenase] + ATP = O-phospho-L-seryl-[isocitrate dehydrogenase] + ADP + H(+). Functionally, bifunctional enzyme which can phosphorylate or dephosphorylate isocitrate dehydrogenase (IDH) on a specific serine residue. This is a regulatory mechanism which enables bacteria to bypass the Krebs cycle via the glyoxylate shunt in response to the source of carbon. When bacteria are grown on glucose, IDH is fully active and unphosphorylated, but when grown on acetate or ethanol, the activity of IDH declines drastically concomitant with its phosphorylation. The sequence is that of Isocitrate dehydrogenase kinase/phosphatase from Pseudomonas putida (strain ATCC 700007 / DSM 6899 / JCM 31910 / BCRC 17059 / LMG 24140 / F1).